A 260-amino-acid polypeptide reads, in one-letter code: Tropinone reductase 2 (260 aa).

Position 13–37 (L13–Y37) interacts with NADP(+). S146 contacts substrate. Y159 serves as the catalytic Proton acceptor.

The protein belongs to the short-chain dehydrogenases/reductases (SDR) family.

It carries out the reaction pseudotropine + NADP(+) = tropinone + NADPH + H(+). Its pathway is alkaloid biosynthesis; tropane alkaloid biosynthesis. In terms of biological role, catalyzes the stereospecific reduction of tropinone to pseudotropine. This is Tropinone reductase 2 (TR2) from Hyoscyamus niger (Black henbane).